Here is a 276-residue protein sequence, read N- to C-terminus: L-aminoadipate-semialdehyde dehydrogenase-phosphopantetheinyl transferase (276 aa).

It belongs to the P-Pant transferase superfamily. AcpS family.

It carries out the reaction apo-[ACP] + CoA = holo-[ACP] + adenosine 3',5'-bisphosphate + H(+). Its function is as follows. Catalyzes the transfer of a 4'-phosphopantetheine moiety from coenzyme A to a serine residue of acceptor proteins, such as alpha-aminoadipate reductase. Necessary for alpha-aminoadipate reductase activity. This is L-aminoadipate-semialdehyde dehydrogenase-phosphopantetheinyl transferase (LYS5) from Eremothecium gossypii (strain ATCC 10895 / CBS 109.51 / FGSC 9923 / NRRL Y-1056) (Yeast).